The following is a 198-amino-acid chain: Superoxide dismutase [Mn], mitochondrial (198 aa).

H26 is a Mn(2+) binding site. Y34 carries the 3'-nitrotyrosine modification. K44 and K51 each carry N6-acetyllysine; alternate. K44 and K51 each carry N6-succinyllysine; alternate. H74 provides a ligand contact to Mn(2+). The residue at position 90 (K90) is an N6-acetyllysine. An N6-acetyllysine; alternate mark is found at K98 and K106. K98 and K106 each carry N6-succinyllysine; alternate. Residues D159 and H163 each coordinate Mn(2+). K178 carries the post-translational modification N6-acetyllysine.

It belongs to the iron/manganese superoxide dismutase family. Homotetramer. Mn(2+) serves as cofactor. Nitrated under oxidative stress. Nitration coupled with oxidation inhibits the catalytic activity. In terms of processing, acetylation at Lys-98 decreases enzymatic activity. Deacetylated by SIRT3 upon exposure to ionizing radiations or after long fasting. Post-translationally, polyubiquitinated; leading to proteasomal degradation. Deubiquitinated by USP36 which increases protein stability.

It is found in the mitochondrion matrix. It carries out the reaction 2 superoxide + 2 H(+) = H2O2 + O2. In terms of biological role, destroys superoxide anion radicals which are normally produced within the cells and which are toxic to biological systems. The chain is Superoxide dismutase [Mn], mitochondrial (SOD2) from Hylobates lar (Lar gibbon).